The chain runs to 274 residues: Large ribosomal subunit protein uL2 (274 aa).

The interval 224 to 254 is disordered; it reads AMNPVDHPHGGGEGRTGEGQAPVSPWNTLTK. Over residues 229 to 239 the composition is skewed to basic and acidic residues; it reads DHPHGGGEGRT.

The protein belongs to the universal ribosomal protein uL2 family. Part of the 50S ribosomal subunit. Forms a bridge to the 30S subunit in the 70S ribosome.

Its function is as follows. One of the primary rRNA binding proteins. Required for association of the 30S and 50S subunits to form the 70S ribosome, for tRNA binding and peptide bond formation. It has been suggested to have peptidyltransferase activity; this is somewhat controversial. Makes several contacts with the 16S rRNA in the 70S ribosome. This is Large ribosomal subunit protein uL2 from Leptothrix cholodnii (strain ATCC 51168 / LMG 8142 / SP-6) (Leptothrix discophora (strain SP-6)).